Consider the following 81-residue polypeptide: Conotoxin Lt6.4 (81 aa).

Positions 1–19 (MKLVLAIVLILMFLSLSAG) are cleaved as a signal peptide. The propeptide occupies 20-42 (AETSDNGVSRGGHRPQYWPVTPP). 3 cysteine pairs are disulfide-bonded: C46-C60, C53-C65, and C59-C80.

It belongs to the conotoxin I3 superfamily. Expressed by the venom duct.

The protein resides in the secreted. The protein is Conotoxin Lt6.4 of Conus litteratus (Lettered cone).